A 396-amino-acid polypeptide reads, in one-letter code: Dimethyladenosine transferase 2, mitochondrial (396 aa).

The N-terminal 19 residues, 1 to 19 (MWIPVVGLPRRLRLSALAG), are a transit peptide targeting the mitochondrion. The segment at 44–64 (LSDSSPQLWPEPDFRNPPRKA) is disordered. Residues V75, E124, and D150 each contribute to the S-adenosyl-L-methionine site. The interval 330–331 (RR) is DNA-binding.

Belongs to the class I-like SAM-binding methyltransferase superfamily. rRNA adenine N(6)-methyltransferase family. KsgA subfamily. In terms of assembly, homodimer. Component of the mitochondrial transcription initiation complex, composed at least of TFB2M, TFAM and POLRMT. In this complex TFAM recruits POLRMT to the promoter whereas TFB2M induces structural changes in POLRMT to enable promoter opening and trapping of the DNA non-template strand. Interacts with mitochondrial RNA polymerase POLRMT. Interacts with TFAM. As to expression, ubiquitously expressed.

Its subcellular location is the mitochondrion. The enzyme catalyses adenosine in rRNA + S-adenosyl-L-methionine = N(6)-methyladenosine in rRNA + S-adenosyl-L-homocysteine + H(+). In terms of biological role, S-adenosyl-L-methionine-dependent rRNA methyltransferase which may methylate two specific adjacent adenosines in the loop of a conserved hairpin near the 3'-end of 12S mitochondrial rRNA. Component of the mitochondrial transcription initiation complex, composed at least of TFB2M, TFAM and POLRMT that is required for basal transcription of mitochondrial DNA. In this complex, TFAM recruits POLRMT to a specific promoter whereas TFB2M induces structural changes in POLRMT to enable promoter opening and trapping of the DNA non-template strand. Stimulates transcription independently of the methyltransferase activity. This is Dimethyladenosine transferase 2, mitochondrial from Homo sapiens (Human).